The sequence spans 44 residues: SPbeta prophage-derived uncharacterized protein YosI (44 aa).

The protein is SPbeta prophage-derived uncharacterized protein YosI (yosI) of Bacillus subtilis (strain 168).